The primary structure comprises 98 residues: NADH-ubiquinone oxidoreductase chain 4L (98 aa).

The next 3 membrane-spanning stretches (helical) occupy residues 1–21, 28–48, and 59–79; these read MTPLNINLTMAFFLALAGVLI, STLLCLEGMMLSLFILLSLLI, and APLILLVFSACEAGVGLALLV.

This sequence belongs to the complex I subunit 4L family. As to quaternary structure, core subunit of respiratory chain NADH dehydrogenase (Complex I) which is composed of 45 different subunits.

The protein localises to the mitochondrion inner membrane. The enzyme catalyses a ubiquinone + NADH + 5 H(+)(in) = a ubiquinol + NAD(+) + 4 H(+)(out). Functionally, core subunit of the mitochondrial membrane respiratory chain NADH dehydrogenase (Complex I) which catalyzes electron transfer from NADH through the respiratory chain, using ubiquinone as an electron acceptor. Part of the enzyme membrane arm which is embedded in the lipid bilayer and involved in proton translocation. This chain is NADH-ubiquinone oxidoreductase chain 4L (MT-ND4L), found in Tarsipes rostratus (Honey possum).